We begin with the raw amino-acid sequence, 153 residues long: D-aminoacyl-tRNA deacylase (153 aa).

Residues 142–143 (GP) carry the Gly-cisPro motif, important for rejection of L-amino acids motif.

It belongs to the DTD family. In terms of assembly, homodimer.

Its subcellular location is the cytoplasm. The enzyme catalyses glycyl-tRNA(Ala) + H2O = tRNA(Ala) + glycine + H(+). It catalyses the reaction a D-aminoacyl-tRNA + H2O = a tRNA + a D-alpha-amino acid + H(+). An aminoacyl-tRNA editing enzyme that deacylates mischarged D-aminoacyl-tRNAs. Also deacylates mischarged glycyl-tRNA(Ala), protecting cells against glycine mischarging by AlaRS. Acts via tRNA-based rather than protein-based catalysis; rejects L-amino acids rather than detecting D-amino acids in the active site. By recycling D-aminoacyl-tRNA to D-amino acids and free tRNA molecules, this enzyme counteracts the toxicity associated with the formation of D-aminoacyl-tRNA entities in vivo and helps enforce protein L-homochirality. This chain is D-aminoacyl-tRNA deacylase, found in Acidovorax ebreus (strain TPSY) (Diaphorobacter sp. (strain TPSY)).